Reading from the N-terminus, the 1302-residue chain is DNA-directed RNA polymerase subunit beta (1302 aa).

The protein belongs to the RNA polymerase beta chain family. In terms of assembly, the RNAP catalytic core consists of 2 alpha, 1 beta, 1 beta' and 1 omega subunit. When a sigma factor is associated with the core the holoenzyme is formed, which can initiate transcription.

The enzyme catalyses RNA(n) + a ribonucleoside 5'-triphosphate = RNA(n+1) + diphosphate. DNA-dependent RNA polymerase catalyzes the transcription of DNA into RNA using the four ribonucleoside triphosphates as substrates. The polypeptide is DNA-directed RNA polymerase subunit beta (Spiroplasma citri).